We begin with the raw amino-acid sequence, 281 residues long: Lipoyl synthase (281 aa).

The [4Fe-4S] cluster site is built by Cys-35, Cys-40, Cys-46, Cys-61, Cys-65, Cys-68, and Ser-274. In terms of domain architecture, Radical SAM core spans 47–263; it reads FGCGQATFLI…RDEALALGFR (217 aa).

It belongs to the radical SAM superfamily. Lipoyl synthase family. It depends on [4Fe-4S] cluster as a cofactor.

Its subcellular location is the cytoplasm. It carries out the reaction [[Fe-S] cluster scaffold protein carrying a second [4Fe-4S](2+) cluster] + N(6)-octanoyl-L-lysyl-[protein] + 2 oxidized [2Fe-2S]-[ferredoxin] + 2 S-adenosyl-L-methionine + 4 H(+) = [[Fe-S] cluster scaffold protein] + N(6)-[(R)-dihydrolipoyl]-L-lysyl-[protein] + 4 Fe(3+) + 2 hydrogen sulfide + 2 5'-deoxyadenosine + 2 L-methionine + 2 reduced [2Fe-2S]-[ferredoxin]. It participates in protein modification; protein lipoylation via endogenous pathway; protein N(6)-(lipoyl)lysine from octanoyl-[acyl-carrier-protein]: step 2/2. Functionally, catalyzes the radical-mediated insertion of two sulfur atoms into the C-6 and C-8 positions of the octanoyl moiety bound to the lipoyl domains of lipoate-dependent enzymes, thereby converting the octanoylated domains into lipoylated derivatives. The polypeptide is Lipoyl synthase (Trichlorobacter lovleyi (strain ATCC BAA-1151 / DSM 17278 / SZ) (Geobacter lovleyi)).